Here is a 90-residue protein sequence, read N- to C-terminus: Small ribosomal subunit protein uS15c (90 aa).

The protein belongs to the universal ribosomal protein uS15 family. Part of the 30S ribosomal subunit.

Its subcellular location is the plastid. It is found in the chloroplast. This chain is Small ribosomal subunit protein uS15c (rps15), found in Buxus microphylla (Littleleaf boxwood).